Here is a 529-residue protein sequence, read N- to C-terminus: Autophagy-related protein 21 (529 aa).

Positions N49 to H62 are enriched in polar residues. A disordered region spans residues N49–T70. WD repeat units lie at residues A271–K311 and G321–C361. The L/FRRG motif motif lies at L318–H322. A disordered region spans residues T362 to E388. A compositionally biased stretch (basic and acidic residues) spans S366–D375.

The protein belongs to the WD repeat PROPPIN family.

Its subcellular location is the cytoplasm. It localises to the membrane. The protein localises to the vacuole membrane. In terms of biological role, required for cytoplasm to vacuole transport (Cvt) vesicles formation and mitophagy. Involved in binding of phosphatidylethanolamine to ATG8 and in recruitment of ATG8 and ATG5 to the pre-autophagosomal structure. Protects ATG8 from ARG4-mediated cleavage. The protein is Autophagy-related protein 21 (ATG21) of Candida albicans (strain SC5314 / ATCC MYA-2876) (Yeast).